Here is a 594-residue protein sequence, read N- to C-terminus: Probable translation initiation factor IF-2 (594 aa).

The 218-residue stretch at 3–220 (IRSPIVSVLG…MLMGLAQQYL (218 aa)) folds into the tr-type G domain. A G1 region spans residues 12–19 (GHVDHGKT). Residue 12-19 (GHVDHGKT) coordinates GTP. Residues 37–41 (GITQH) are G2. Residues 76–79 (DTPG) are G3. GTP-binding positions include 76–80 (DTPGH) and 130–133 (NKID). The tract at residues 130–133 (NKID) is G4. The segment at 198–200 (SAI) is G5.

The protein belongs to the TRAFAC class translation factor GTPase superfamily. Classic translation factor GTPase family. IF-2 subfamily.

Function in general translation initiation by promoting the binding of the formylmethionine-tRNA to ribosomes. Seems to function along with eIF-2. This is Probable translation initiation factor IF-2 (infB) from Methanothermobacter thermautotrophicus (strain ATCC 29096 / DSM 1053 / JCM 10044 / NBRC 100330 / Delta H) (Methanobacterium thermoautotrophicum).